Here is a 227-residue protein sequence, read N- to C-terminus: Phosphoribosylformylglycinamidine synthase subunit PurQ (227 aa).

Residues 2 to 226 (KFAVIQFPGS…VKAWKEEQVN (225 aa)) form the Glutamine amidotransferase type-1 domain. Catalysis depends on Cys86, which acts as the Nucleophile. Catalysis depends on residues His195 and Glu197.

In terms of assembly, part of the FGAM synthase complex composed of 1 PurL, 1 PurQ and 2 PurS subunits.

The protein resides in the cytoplasm. The catalysed reaction is N(2)-formyl-N(1)-(5-phospho-beta-D-ribosyl)glycinamide + L-glutamine + ATP + H2O = 2-formamido-N(1)-(5-O-phospho-beta-D-ribosyl)acetamidine + L-glutamate + ADP + phosphate + H(+). The enzyme catalyses L-glutamine + H2O = L-glutamate + NH4(+). It participates in purine metabolism; IMP biosynthesis via de novo pathway; 5-amino-1-(5-phospho-D-ribosyl)imidazole from N(2)-formyl-N(1)-(5-phospho-D-ribosyl)glycinamide: step 1/2. In terms of biological role, part of the phosphoribosylformylglycinamidine synthase complex involved in the purines biosynthetic pathway. Catalyzes the ATP-dependent conversion of formylglycinamide ribonucleotide (FGAR) and glutamine to yield formylglycinamidine ribonucleotide (FGAM) and glutamate. The FGAM synthase complex is composed of three subunits. PurQ produces an ammonia molecule by converting glutamine to glutamate. PurL transfers the ammonia molecule to FGAR to form FGAM in an ATP-dependent manner. PurS interacts with PurQ and PurL and is thought to assist in the transfer of the ammonia molecule from PurQ to PurL. This chain is Phosphoribosylformylglycinamidine synthase subunit PurQ, found in Listeria monocytogenes serotype 4b (strain CLIP80459).